The following is a 221-amino-acid chain: 7-cyano-7-deazaguanine synthase (221 aa).

Y9–L19 contacts ATP. Zn(2+) is bound by residues C185, C193, C196, and C199.

This sequence belongs to the QueC family. Zn(2+) is required as a cofactor.

The catalysed reaction is 7-carboxy-7-deazaguanine + NH4(+) + ATP = 7-cyano-7-deazaguanine + ADP + phosphate + H2O + H(+). Its pathway is purine metabolism; 7-cyano-7-deazaguanine biosynthesis. Catalyzes the ATP-dependent conversion of 7-carboxy-7-deazaguanine (CDG) to 7-cyano-7-deazaguanine (preQ(0)). The protein is 7-cyano-7-deazaguanine synthase of Marinobacter nauticus (strain ATCC 700491 / DSM 11845 / VT8) (Marinobacter aquaeolei).